The following is an 86-amino-acid chain: Cell division topological specificity factor (86 aa).

It belongs to the MinE family.

Prevents the cell division inhibition by proteins MinC and MinD at internal division sites while permitting inhibition at polar sites. This ensures cell division at the proper site by restricting the formation of a division septum at the midpoint of the long axis of the cell. This Shewanella pealeana (strain ATCC 700345 / ANG-SQ1) protein is Cell division topological specificity factor.